Reading from the N-terminus, the 260-residue chain is Carbonic anhydrase 3 (260 aa).

A2 carries the N-acetylalanine modification. One can recognise an Alpha-carbonic anhydrase domain in the interval 3-259 (KEWGYADHNG…IKGRIVKASF (257 aa)). S29, S43, S50, and S55 each carry phosphoserine. The tract at residues 64–67 (KTCR) is involved in proton transfer. T73 is modified (phosphothreonine). Zn(2+)-binding residues include H94, H96, and H119. A Phosphotyrosine modification is found at Y127. An S-glutathionyl cysteine mark is found at C182 and C187. Substrate is bound at residue 198–199 (TT). At T216 the chain carries Phosphothreonine. The residue at position 219 (S219) is a Phosphoserine.

This sequence belongs to the alpha-carbonic anhydrase family. Zn(2+) is required as a cofactor. In terms of processing, S-thiolated both by thiol-disulfide exchange with glutathione disulfide and by oxyradical-initiated S-thiolation with reduced glutathione. Post-translationally, S-glutathionylated in hepatocytes under oxidative stress.

Its subcellular location is the cytoplasm. The enzyme catalyses hydrogencarbonate + H(+) = CO2 + H2O. With respect to regulation, inhibited by acetazolamide. Its function is as follows. Reversible hydration of carbon dioxide. The sequence is that of Carbonic anhydrase 3 (CA3) from Bos taurus (Bovine).